The chain runs to 215 residues: Small ribosomal subunit protein uS3 (215 aa).

The 71-residue stretch at 39–109 (IRKFIKKRLE…EVLVDVKEVK (71 aa)) folds into the KH type-2 domain.

It belongs to the universal ribosomal protein uS3 family. As to quaternary structure, part of the 30S ribosomal subunit. Forms a tight complex with proteins S10 and S14.

Functionally, binds the lower part of the 30S subunit head. Binds mRNA in the 70S ribosome, positioning it for translation. The polypeptide is Small ribosomal subunit protein uS3 (Methylacidiphilum infernorum (isolate V4) (Methylokorus infernorum (strain V4))).